The following is a 128-amino-acid chain: L-ectoine synthase (128 aa).

Belongs to the ectoine synthase family.

The enzyme catalyses (2S)-4-acetamido-2-aminobutanoate = L-ectoine + H2O. It functions in the pathway amine and polyamine biosynthesis; ectoine biosynthesis; L-ectoine from L-aspartate 4-semialdehyde: step 3/3. In terms of biological role, catalyzes the circularization of gamma-N-acetyl-alpha,gamma-diaminobutyric acid (ADABA) to ectoine (1,4,5,6-tetrahydro-2-methyl-4-pyrimidine carboxylic acid), which is an excellent osmoprotectant. The chain is L-ectoine synthase from Vibrio atlanticus (strain LGP32) (Vibrio splendidus (strain Mel32)).